The sequence spans 472 residues: Velvet complex subunit umv2 (472 aa).

4 stretches are compositionally biased toward basic and acidic residues: residues 1–10 (MSRSDTDGRD), 29–59 (SQRR…DSHG), 67–80 (YSRD…HRGD), and 89–105 (SYQR…EQER). Disordered regions lie at residues 1–121 (MSRS…PLEA), 281–327 (CDDG…QFGG), and 433–472 (SQGI…EDDE). Residues 106-116 (SYGGASASRSS) show a composition bias toward low complexity. The Velvet domain occupies 158–441 (ENGRRYRLVV…ASQGIKIPVR (284 aa)). Residues 286-298 (RSSTHPQHASEST) are compositionally biased toward polar residues. Residues 456–466 (DGMGDYDGASG) are compositionally biased toward gly residues.

This sequence belongs to the velvet family. VelB subfamily. Component of the heterotrimeric velvet complex composed of laeA, veA and velB; VeA acting as a bridging protein between laeA and velB. Forms a heterodimeric complex with vosA; the formation of the velB-vosA complex is light-dependent.

It localises to the nucleus. Its subcellular location is the cytoplasm. Functionally, component of the velvet transcription factor complex that controls sexual/asexual developmental ratio in response to light, promoting sexual development in the darkness while stimulating asexual sporulation under illumination. The velvet complex acts as a global regulator for secondary metabolite gene expression. Component of the velB-VosA heterodimeric complex that plays a dual role in activating genes associated with spore maturation and repressing certain development-associated genes. The velB-VosA complex binds DNA through the DNA-binding domain of vosA that recognizes an 11-nucleotide consensus sequence 5'-CTGGCCGCGGC-3' consisting of two motifs in the promoters of key developmental regulatory genes. Required for full virulence on seedlings. This is Velvet complex subunit umv2 from Mycosarcoma maydis (Corn smut fungus).